The primary structure comprises 245 residues: Probable phosphatase KPK_3500 (245 aa).

Residues His7, His9, His15, His40, Glu73, His101, His131, Asp192, and His194 each coordinate Zn(2+).

It belongs to the PHP family. In terms of assembly, homotrimer. It depends on Zn(2+) as a cofactor.

The polypeptide is Probable phosphatase KPK_3500 (Klebsiella pneumoniae (strain 342)).